The sequence spans 682 residues: Potassium-transporting ATPase ATP-binding subunit (682 aa).

4 consecutive transmembrane segments (helical) span residues 34 to 54 (PVMF…VAMA), 62 to 82 (AGFT…ANVA), 219 to 239 (IALT…TATL), and 254 to 274 (VLVA…LSAI). Asp307 serves as the catalytic 4-aspartylphosphate intermediate. Residues Asp344, Glu348, 377 to 384 (FTAQTRMS), and Lys395 each bind ATP. Residues Asp518 and Asp522 each contribute to the Mg(2+) site. The next 3 membrane-spanning stretches (helical) occupy residues 588–608 (FAII…LNVM), 616–636 (AILS…PLAL), and 662–682 (LVVP…FGLV).

This sequence belongs to the cation transport ATPase (P-type) (TC 3.A.3) family. Type IA subfamily. In terms of assembly, the system is composed of three essential subunits: KdpA, KdpB and KdpC.

It is found in the cell inner membrane. The catalysed reaction is K(+)(out) + ATP + H2O = K(+)(in) + ADP + phosphate + H(+). Part of the high-affinity ATP-driven potassium transport (or Kdp) system, which catalyzes the hydrolysis of ATP coupled with the electrogenic transport of potassium into the cytoplasm. This subunit is responsible for energy coupling to the transport system and for the release of the potassium ions to the cytoplasm. This is Potassium-transporting ATPase ATP-binding subunit from Enterobacter sp. (strain 638).